The following is a 260-amino-acid chain: Tryptophan synthase alpha chain (260 aa).

Active-site proton acceptor residues include glutamate 52 and aspartate 63.

This sequence belongs to the TrpA family. Tetramer of two alpha and two beta chains.

It carries out the reaction (1S,2R)-1-C-(indol-3-yl)glycerol 3-phosphate + L-serine = D-glyceraldehyde 3-phosphate + L-tryptophan + H2O. It functions in the pathway amino-acid biosynthesis; L-tryptophan biosynthesis; L-tryptophan from chorismate: step 5/5. The alpha subunit is responsible for the aldol cleavage of indoleglycerol phosphate to indole and glyceraldehyde 3-phosphate. The chain is Tryptophan synthase alpha chain from Streptococcus thermophilus (strain ATCC BAA-250 / LMG 18311).